A 472-amino-acid chain; its full sequence is P2X purinoceptor 2 (472 aa).

Topologically, residues 1-34 are cytoplasmic; it reads MVRRLARGCWSAFWDYETPKVIVVRNRRLGFVHR. 6 disulfide bridges follow: C9/C430, C113/C164, C124/C147, C130/C158, C214/C224, and C258/C267. Residues 35 to 52 traverse the membrane as a helical segment; it reads MVQLLILLYFVWYVFIVQ. The Extracellular segment spans residues 53 to 326; that stretch reads KSYQDSETGP…IVHGQAGKFS (274 aa). The ATP site is built by K69 and K71. N-linked (GlcNAc...) asparagine glycosylation occurs at N182. ATP is bound at residue T184. N239 carries N-linked (GlcNAc...) asparagine glycosylation. Positions 284, 288, and 290 each coordinate ATP. N-linked (GlcNAc...) asparagine glycosylation occurs at N298. Residue K308 participates in ATP binding. The tract at residues 309-322 is pore-forming motif; the sequence is AYGIRIDVIVHGQA. The chain crosses the membrane as a helical span at residues 327-347; sequence LIPTIINLATALTSIGVGSFL. The Cytoplasmic portion of the chain corresponds to 348 to 472; the sequence is CDWILLTFMN…STDPKGLAQL (125 aa). The interval 393–472 is disordered; it reads PPPSHYSQDQ…STDPKGLAQL (80 aa). Residues 456–465 are compositionally biased toward polar residues; that stretch reads PSQQDSTSTD.

The protein belongs to the P2X receptor family. In terms of assembly, homotrimer and heterotrimer; functional P2XRs are organized as homomeric and heteromeric trimers. Homotrimer. Forms heterotrimer with P2RX1. Forms heterotrimer with P2RX6. Forms heterotrimer with P2RX3. High levels in pituitary and vas deferens. Lower extent in spinal cord, bladder, brain, adrenal, testis, sensory epithelia from the inner ear.

The protein resides in the cell membrane. It carries out the reaction Ca(2+)(in) = Ca(2+)(out). The enzyme catalyses K(+)(in) = K(+)(out). The catalysed reaction is Na(+)(in) = Na(+)(out). Its activity is regulated as follows. Fast activation by external ATP. Exhibits slow desensitization during prolonged ATP activation. Not sensitive to the ATP agonist:alpha/beta-methylene-ATP. Functionally, ATP-gated nonselective transmembrane cation channel permeable to potassium, sodium and calcium. Activation by extracellular ATP induces a variety of cellular responses, such as excitatory postsynaptic responses in sensory neurons, neuromuscular junctions (NMJ) formation, hearing, perception of taste and peristalsis. In the inner ear, regulates sound transduction and auditory neurotransmission, outer hair cell electromotility, inner ear gap junctions, and K(+) recycling. Mediates synaptic transmission between neurons and from neurons to smooth muscle. In Rattus norvegicus (Rat), this protein is P2X purinoceptor 2 (P2rx2).